Consider the following 617-residue polypeptide: LEAF RUST 10 DISEASE-RESISTANCE LOCUS RECEPTOR-LIKE PROTEIN KINASE-like 2.4 (617 aa).

The N-terminal stretch at 1 to 26 is a signal peptide; the sequence is MYYLPSSCLVLFLFFSLFYHLPCASS. The Extracellular portion of the chain corresponds to 27–243; it reads KQTLGWCESQ…LPTRLSSEAK (217 aa). Residues asparagine 41, asparagine 69, asparagine 86, asparagine 112, and asparagine 184 are each glycosylated (N-linked (GlcNAc...) asparagine). The chain crosses the membrane as a helical span at residues 244–264; sequence IATIAGVSLLPFLVLTLVVHI. The Cytoplasmic segment spans residues 265–617; it reads IRKQKTSNDK…SEENSISSEI (353 aa). One can recognise a Protein kinase domain in the interval 307–594; that stretch reads NSFAEVVGRG…ALEVPPRPVL (288 aa). ATP-binding positions include 313–321 and lysine 335; that span reads VGRGGFGIV. The residue at position 380 (tyrosine 380) is a Phosphotyrosine. Aspartate 431 functions as the Proton acceptor in the catalytic mechanism. Phosphothreonine occurs at positions 468 and 471.

It belongs to the protein kinase superfamily. Ser/Thr protein kinase family.

It localises to the membrane. It catalyses the reaction L-seryl-[protein] + ATP = O-phospho-L-seryl-[protein] + ADP + H(+). It carries out the reaction L-threonyl-[protein] + ATP = O-phospho-L-threonyl-[protein] + ADP + H(+). The polypeptide is LEAF RUST 10 DISEASE-RESISTANCE LOCUS RECEPTOR-LIKE PROTEIN KINASE-like 2.4 (Arabidopsis thaliana (Mouse-ear cress)).